The sequence spans 103 residues: ATP-dependent Clp protease adapter protein ClpS 1 (103 aa).

The protein belongs to the ClpS family. As to quaternary structure, binds to the N-terminal domain of the chaperone ClpA.

Its function is as follows. Involved in the modulation of the specificity of the ClpAP-mediated ATP-dependent protein degradation. The protein is ATP-dependent Clp protease adapter protein ClpS 1 of Rhodopseudomonas palustris (strain ATCC BAA-98 / CGA009).